Consider the following 473-residue polypeptide: Glutamate--tRNA ligase (473 aa).

The short motif at 11–21 is the 'HIGH' region element; the sequence is PSPTGFLHIGG. The 'KMSKS' region motif lies at 240 to 244; the sequence is KLSKR. Lys-243 contributes to the ATP binding site.

The protein belongs to the class-I aminoacyl-tRNA synthetase family. Glutamate--tRNA ligase type 1 subfamily. As to quaternary structure, monomer.

It is found in the cytoplasm. The enzyme catalyses tRNA(Glu) + L-glutamate + ATP = L-glutamyl-tRNA(Glu) + AMP + diphosphate. Catalyzes the attachment of glutamate to tRNA(Glu) in a two-step reaction: glutamate is first activated by ATP to form Glu-AMP and then transferred to the acceptor end of tRNA(Glu). The sequence is that of Glutamate--tRNA ligase from Rhodopseudomonas palustris (strain HaA2).